The following is a 214-amino-acid chain: External core antigen (214 aa).

The first 19 residues, 1 to 19 (MQLFHLCLIISCTCPTVQA), serve as a signal peptide directing secretion. The HBEAG stretch occupies residues 25–27 (GWL). The tract at residues 165–214 (NAPILSTLPETTVVRRRDRGRSPRRRTPSPRRRRSPSPRRRRSQSRESQC) is disordered. The segment covering 178-207 (VRRRDRGRSPRRRTPSPRRRRSPSPRRRRS) has biased composition (basic residues). One copy of the 1; half-length repeat lies at 186–192 (SPRRRTP). Residues 186 to 208 (SPRRRTPSPRRRRSPSPRRRRSQ) form a 3 X 8 AA repeats of S-P-R-R-R-R-S-[PQ] region. The propeptide occupies 186–214 (SPRRRTPSPRRRRSPSPRRRRSQSRESQC). 2 repeat units span residues 193–200 (SPRRRRSP) and 201–208 (SPRRRRSQ).

The protein belongs to the orthohepadnavirus precore antigen family. Homodimerizes. Phosphorylated. In terms of processing, cleaved by host furin.

The protein localises to the secreted. It localises to the host nucleus. Functionally, may regulate immune response to the intracellular capsid in acting as a T-cell tolerogen, by having an immunoregulatory effect which prevents destruction of infected cells by cytotoxic T-cells. This immune regulation may predispose to chronicity during perinatal infections and prevent severe liver injury during adult infections. This is External core antigen from Hepatitis B virus genotype A2 subtype adw2 (strain Rutter 1979) (HBV-A).